Consider the following 248-residue polypeptide: 2,3-bisphosphoglycerate-dependent phosphoglycerate mutase (248 aa).

Substrate is bound by residues 8 to 15, 21 to 22, arginine 60, 87 to 90, lysine 98, 114 to 115, and 183 to 184; these read RHGESTWN, TG, ERHY, RR, and GN. The active-site Tele-phosphohistidine intermediate is the histidine 9. The active-site Proton donor/acceptor is glutamate 87.

The protein belongs to the phosphoglycerate mutase family. BPG-dependent PGAM subfamily. Homodimer.

The enzyme catalyses (2R)-2-phosphoglycerate = (2R)-3-phosphoglycerate. It functions in the pathway carbohydrate degradation; glycolysis; pyruvate from D-glyceraldehyde 3-phosphate: step 3/5. In terms of biological role, catalyzes the interconversion of 2-phosphoglycerate and 3-phosphoglycerate. This is 2,3-bisphosphoglycerate-dependent phosphoglycerate mutase from Burkholderia vietnamiensis (strain G4 / LMG 22486) (Burkholderia cepacia (strain R1808)).